A 383-amino-acid chain; its full sequence is ATP phosphoribosyltransferase regulatory subunit (383 aa).

Belongs to the class-II aminoacyl-tRNA synthetase family. HisZ subfamily. Heteromultimer composed of HisG and HisZ subunits.

Its subcellular location is the cytoplasm. It functions in the pathway amino-acid biosynthesis; L-histidine biosynthesis; L-histidine from 5-phospho-alpha-D-ribose 1-diphosphate: step 1/9. Required for the first step of histidine biosynthesis. May allow the feedback regulation of ATP phosphoribosyltransferase activity by histidine. The polypeptide is ATP phosphoribosyltransferase regulatory subunit (Desulfitobacterium hafniense (strain Y51)).